Reading from the N-terminus, the 367-residue chain is 2-aminoethylphosphonate--pyruvate transaminase (367 aa).

K194 bears the N6-(pyridoxal phosphate)lysine mark.

It belongs to the class-V pyridoxal-phosphate-dependent aminotransferase family. PhnW subfamily. As to quaternary structure, homodimer. Pyridoxal 5'-phosphate serves as cofactor.

It carries out the reaction (2-aminoethyl)phosphonate + pyruvate = phosphonoacetaldehyde + L-alanine. Functionally, involved in phosphonate degradation. The chain is 2-aminoethylphosphonate--pyruvate transaminase from Salmonella paratyphi A (strain ATCC 9150 / SARB42).